The sequence spans 59 residues: Large ribosomal subunit protein bL32 (59 aa).

This sequence belongs to the bacterial ribosomal protein bL32 family.

The polypeptide is Large ribosomal subunit protein bL32 (Synechococcus sp. (strain RCC307)).